A 291-amino-acid polypeptide reads, in one-letter code: Urease accessory protein UreD (291 aa).

The protein belongs to the UreD family. UreD, UreF and UreG form a complex that acts as a GTP-hydrolysis-dependent molecular chaperone, activating the urease apoprotein by helping to assemble the nickel containing metallocenter of UreC. The UreE protein probably delivers the nickel.

The protein localises to the cytoplasm. Functionally, required for maturation of urease via the functional incorporation of the urease nickel metallocenter. The polypeptide is Urease accessory protein UreD (Acinetobacter baumannii (strain SDF)).